A 495-amino-acid polypeptide reads, in one-letter code: Inner membrane ALBINO3-like protein 1, chloroplastic (495 aa).

A helical membrane pass occupies residues 76–96; the sequence is LGAIYVLADASASTAAAAVMP. Over 97–206 the chain is Stromal; it reads TAVDSAAGAA…VLYEQAGVNP (110 aa). Residues 207–227 traverse the membrane as a helical segment; that stretch reads LAGCLPTLATIPIFIGLFSSL. Residues 228 to 273 are Lumenal-facing; sequence TNVANDGLLDTQGFYFVPSLAGPTTMAMRQSGLGTSWLWPLGPDGA. The chain crosses the membrane as a helical span at residues 274–294; sequence PPIGWEDAAAYLTLPLLLVAV. The Stromal segment spans residues 295–317; the sequence is QYASSSVTSPPIDPKDENANTQR. The helical transmembrane segment at 318–338 threads the bilayer; sequence ALLVFLPLMVGWFSLNVPAGL. The Lumenal segment spans residues 339–441; sequence SLYYLANTVL…ASVSLSVDDS (103 aa). A helical transmembrane segment spans residues 442-462; it reads TAAIAGTATMAVTAGAPAAAM. The Stromal segment spans residues 463–495; it reads DPSKVNRRCKRRRLTSLVQDGSTASAAVAGASA.

It belongs to the OXA1/ALB3/YidC (TC 2.A.9.2) family. In terms of assembly, associates with the LHCII complex and with the psaE subunit of the LHCI complex.

It is found in the plastid. The protein resides in the chloroplast thylakoid membrane. Functionally, required for the insertion of some light-harvesting complexes (LHC) proteins into the chloroplast thylakoid membrane. Essential for the assembly and activity of LHC I and II. Its function is probably partly distinct from that of ALB3.2. The polypeptide is Inner membrane ALBINO3-like protein 1, chloroplastic (ALB3.1) (Chlamydomonas reinhardtii (Chlamydomonas smithii)).